Reading from the N-terminus, the 216-residue chain is Large ribosomal subunit protein uL3 (216 aa).

The tract at residues 132 to 157 (FRGQGASHGTQAVHRKPGSIGGCATP) is disordered.

It belongs to the universal ribosomal protein uL3 family. In terms of assembly, part of the 50S ribosomal subunit. Forms a cluster with proteins L14 and L19.

One of the primary rRNA binding proteins, it binds directly near the 3'-end of the 23S rRNA, where it nucleates assembly of the 50S subunit. The protein is Large ribosomal subunit protein uL3 of Saccharopolyspora erythraea (strain ATCC 11635 / DSM 40517 / JCM 4748 / NBRC 13426 / NCIMB 8594 / NRRL 2338).